The primary structure comprises 631 residues: 30-kDa cleavage and polyadenylation specificity factor 30 (631 aa).

The segment at 12–38 is disordered; sequence EGGLDSGPVQNTASVPVAPPENSSSAA. 3 C3H1-type zinc fingers span residues 60–87, 88–112, and 114–141; these read SFRQ…HQFD, KARM…VYKH, and NEDI…HAKL. A disordered region spans residues 179–234; the sequence is QDRPQGQVPMQGQPQESGNLQQQQQQQPQQSQHQVSQTLIPNPADQTNRTSHPLPQ. Over residues 182–215 the composition is skewed to low complexity; it reads PQGQVPMQGQPQESGNLQQQQQQQPQQSQHQVSQ. Residues 216-231 show a composition bias toward polar residues; sequence TLIPNPADQTNRTSHP. One can recognise a YTH domain in the interval 237–372; sequence NRYFVVKSNN…SVGEQLASLL (136 aa). Positions 392–407 are enriched in basic and acidic residues; the sequence is EEEKAKGVNPESRAEN. Disordered stretches follow at residues 392–447 and 541–631; these read EEEK…RGIM and PHMG…KKRR. A compositionally biased stretch (acidic residues) spans 412 to 432; sequence PFEDNEEEEEEEDESEEEEES. Over residues 573–583 the composition is skewed to basic and acidic residues; that stretch reads KTPERSDERGV. Phosphoserine occurs at positions 610 and 612. Basic residues predominate over residues 621–631; the sequence is RSRHGEGKKRR.

It belongs to the CPSF4/YTH1 family. Component of the cleavage and polyadenylation specificity factor (CPSF) complex. Can form homodimers. Binds to calmodulin. Forms a complex with cleavage and polyadenylation specificity factor (CPSF) subunits CPSF73-I, CPSF73-II, CPSF100, CPSF160, CFIS2, FIPS3, FIPS5, PAPS2, PAPS3, CLPS3, PCFS1, PCFS4, CSTF50 and CSTF77. Expressed in seedlings, roots, leaves, siliques, stems and flowers.

The protein resides in the nucleus. The protein localises to the cytoplasm. Endonuclease activity is repressed by the N-terminal domain of FIPS5. Nuclease activity is inhibited by zinc (&gt;100 uM), cadmium in a progressive manner (50 percent activity at 1 mM Cd(2+)), and high salt levels (e.g. KCl or NaCl &gt;600 mM). Stimulated by ATP in the presence of Zn(2+), even at inhibitory zinc concentrations. Elevated temperatures prevent RNA-binding at 55 degrees Celsius, but endonuclease activity at 70 degrees Celsius. The sulfhydryl reagent dithiothreitol (DTT) inhibits both RNA-binding and nuclease activities. Functionally, component of the cleavage and polyadenylation specificity factor (CPSF) complex that play a key role in pre-mRNA 3'-end formation. May interact with poly(A) polymerase and other factors to bring about cleavage and poly(A) addition. Mediates poly(A) site selection. Binds RNA in a calcium-dependent manner. Exhibits endonuclease activity with an ability to nick and degrade linear as well as circular single-stranded RNA that leaves RNA 3' ends with hydroxyl groups, thus mediating processing of the pre-mRNA as a prelude to the polyadenylation. Involved in the post-transcriptional control, probably via poly(A) addition, of the responses of plants to stress, especially genes mediating tolerance to oxidative stress. Plays a role in the regulation of salicylic acid (SA) production via the control of messenger RNA 3' end processing, thus being a key component of programmed cell death and plant immune responses required for resistance to virulent Pseudomonas syringae pv tomato DC3000 (Pst). The sequence is that of 30-kDa cleavage and polyadenylation specificity factor 30 from Arabidopsis thaliana (Mouse-ear cress).